The following is a 502-amino-acid chain: 2,3-bisphosphoglycerate-independent phosphoglycerate mutase (502 aa).

Mn(2+) is bound by residues aspartate 13 and serine 63. Residue serine 63 is the Phosphoserine intermediate of the active site. Residues histidine 117, 146-147 (RD), arginine 177, arginine 183, 251-254 (RSDR), and lysine 324 each bind substrate. The Mn(2+) site is built by aspartate 389, histidine 393, aspartate 430, histidine 431, and histidine 448.

It belongs to the BPG-independent phosphoglycerate mutase family. Monomer. It depends on Mn(2+) as a cofactor.

It catalyses the reaction (2R)-2-phosphoglycerate = (2R)-3-phosphoglycerate. It participates in carbohydrate degradation; glycolysis; pyruvate from D-glyceraldehyde 3-phosphate: step 3/5. Functionally, catalyzes the interconversion of 2-phosphoglycerate and 3-phosphoglycerate. This is 2,3-bisphosphoglycerate-independent phosphoglycerate mutase from Ureaplasma urealyticum serovar 10 (strain ATCC 33699 / Western).